A 37-amino-acid polypeptide reads, in one-letter code: NAD-reducing hydrogenase HoxS subunit alpha (37 aa).

This sequence belongs to the complex I 51 kDa subunit family. In terms of assembly, tetramer of an alpha and a gamma subunits (flavin-containing dimer), and a delta and a nickel-containing beta subunits (hydrogenase dimer). Requires FMN as cofactor. [4Fe-4S] cluster is required as a cofactor.

It localises to the cytoplasm. The catalysed reaction is H2 + NAD(+) = NADH + H(+). Subunits alpha and gamma of HoxS constitute an NADH--oxidoreductase. This chain is NAD-reducing hydrogenase HoxS subunit alpha (hoxF), found in Rhodococcus opacus (Nocardia opaca).